We begin with the raw amino-acid sequence, 106 residues long: Aspartyl/glutamyl-tRNA(Asn/Gln) amidotransferase subunit C (106 aa).

Belongs to the GatC family. In terms of assembly, heterotrimer of A, B and C subunits.

The catalysed reaction is L-glutamyl-tRNA(Gln) + L-glutamine + ATP + H2O = L-glutaminyl-tRNA(Gln) + L-glutamate + ADP + phosphate + H(+). It carries out the reaction L-aspartyl-tRNA(Asn) + L-glutamine + ATP + H2O = L-asparaginyl-tRNA(Asn) + L-glutamate + ADP + phosphate + 2 H(+). In terms of biological role, allows the formation of correctly charged Asn-tRNA(Asn) or Gln-tRNA(Gln) through the transamidation of misacylated Asp-tRNA(Asn) or Glu-tRNA(Gln) in organisms which lack either or both of asparaginyl-tRNA or glutaminyl-tRNA synthetases. The reaction takes place in the presence of glutamine and ATP through an activated phospho-Asp-tRNA(Asn) or phospho-Glu-tRNA(Gln). This chain is Aspartyl/glutamyl-tRNA(Asn/Gln) amidotransferase subunit C, found in Lactiplantibacillus plantarum (strain ATCC BAA-793 / NCIMB 8826 / WCFS1) (Lactobacillus plantarum).